The primary structure comprises 549 residues: Cation/acetate symporter ActP (549 aa).

Topologically, residues 1-32 are periplasmic; the sequence is MKRVLTALAATLPFAANAADAISGAVERQPTN. Residues 33 to 55 traverse the membrane as a helical segment; sequence WQAIIMFLIFVVFTLGITYWASK. Residues 56-75 lie on the Cytoplasmic side of the membrane; it reads RVRSRNDYYTAGGNITGFQN. The chain crosses the membrane as a helical span at residues 76–98; that stretch reads GLAIAGDYMSAASFLGISALVFT. The Periplasmic portion of the chain corresponds to 99-102; the sequence is SGYD. A helical membrane pass occupies residues 103–125; the sequence is GLIYSLGFLVGWPIILFLIAERL. Topologically, residues 126–145 are cytoplasmic; it reads RNLGRYTFADVASYRLKQGP. A helical transmembrane segment spans residues 146 to 168; it reads IRILSACGSLVVVALYLIAQMVG. The Periplasmic segment spans residues 169–182; it reads AGKLIELLFGLNYH. The helical transmembrane segment at 183-205 threads the bilayer; that stretch reads IAVVLVGVLMMMYVLFGGMLATT. Topologically, residues 206–211 are cytoplasmic; that stretch reads WVQIIK. Residues 212-234 traverse the membrane as a helical segment; the sequence is AVLLLFGASFMAFMVMKHVGFSF. Topologically, residues 235-263 are periplasmic; the sequence is NNLFSEAMAVHPKGVDIMKPGGLVKDPIS. The chain crosses the membrane as a helical span at residues 264-286; sequence ALSLGLGLMFGTAGLPHILMHFF. Residues 287–297 lie on the Cytoplasmic side of the membrane; that stretch reads TVSDAREARKS. The helical transmembrane segment at 298 to 320 threads the bilayer; the sequence is VFYATGFMGYFYILTFIIGFGAI. Topologically, residues 321-358 are periplasmic; the sequence is MLVGANPEYKDAAGHLIGGNNMAAVHLANAVGGNLFLG. Residues 359 to 381 traverse the membrane as a helical segment; the sequence is FISAVAFATILAVVAGLTLAGAS. The Cytoplasmic portion of the chain corresponds to 382–401; sequence AVSHDLYANVFKKGATEREE. A helical transmembrane segment spans residues 402–424; it reads LRVSKITVLILGVIAIILGVLFE. Over 425-427 the chain is Periplasmic; it reads NQN. Residues 428-450 traverse the membrane as a helical segment; that stretch reads IAFMVGLAFAIAASCNFPIILLS. Residues 451–461 are Cytoplasmic-facing; the sequence is MYWSKLTTRGA. The chain crosses the membrane as a helical span at residues 462 to 484; sequence MLGGWLGLITAVVLMILGPTIWV. Over 485 to 493 the chain is Periplasmic; that stretch reads QILGHEKAI. A helical transmembrane segment spans residues 494–516; that stretch reads FPYEYPALFSISVAFLGIWLFSA. Residues 517–549 are Cytoplasmic-facing; the sequence is TDNSAEGARERELFRAQFIRSQTGFGVEQGRAH.

This sequence belongs to the sodium:solute symporter (SSF) (TC 2.A.21) family.

It localises to the cell inner membrane. Functionally, transports acetate. The sequence is that of Cation/acetate symporter ActP (actP) from Escherichia coli O6:H1 (strain CFT073 / ATCC 700928 / UPEC).